The following is an 80-amino-acid chain: Translation initiation factor IF-1 (80 aa).

The S1-like domain occupies Arg-6–Leu-80.

This sequence belongs to the IF-1 family. As to quaternary structure, component of the 30S ribosomal translation pre-initiation complex which assembles on the 30S ribosome in the order IF-2 and IF-3, IF-1 and N-formylmethionyl-tRNA(fMet); mRNA recruitment can occur at any time during PIC assembly.

Its subcellular location is the cytoplasm. Its function is as follows. One of the essential components for the initiation of protein synthesis. Stabilizes the binding of IF-2 and IF-3 on the 30S subunit to which N-formylmethionyl-tRNA(fMet) subsequently binds. Helps modulate mRNA selection, yielding the 30S pre-initiation complex (PIC). Upon addition of the 50S ribosomal subunit IF-1, IF-2 and IF-3 are released leaving the mature 70S translation initiation complex. This is Translation initiation factor IF-1 from Aquifex aeolicus (strain VF5).